The sequence spans 321 residues: Carnitine monooxygenase reductase subunit (321 aa).

Positions 4–109 constitute an FAD-binding FR-type domain; it reads YQMFEVQVSQ…STPNNLFALI (106 aa). A 2Fe-2S ferredoxin-type domain is found at 233–321; it reads DAFTLVLARS…AKGKRLVLDL (89 aa). [2Fe-2S] cluster-binding residues include C270, C275, C278, and C308.

This sequence belongs to the PDR/VanB family. CntB subfamily. Composed of an oxygenase subunit (yeaW) and a reductase subunit (yeaX). Requires FMN as cofactor. [2Fe-2S] cluster is required as a cofactor.

It catalyses the reaction (R)-carnitine + NADH + O2 + H(+) = (3R)-3-hydroxy-4-oxobutanoate + trimethylamine + NAD(+) + H2O. The catalysed reaction is (R)-carnitine + NADPH + O2 + H(+) = (3R)-3-hydroxy-4-oxobutanoate + trimethylamine + NADP(+) + H2O. It participates in amine and polyamine metabolism; carnitine metabolism. Functionally, converts carnitine to trimethylamine and malic semialdehyde. Can also use gamma-butyrobetaine, choline and betaine as substrates. The chain is Carnitine monooxygenase reductase subunit (yeaX) from Escherichia coli (strain K12).